Reading from the N-terminus, the 359-residue chain is Norspermidine sensor (359 aa).

Residues 1–33 form the signal peptide; sequence MTNFCNEWVSYSQMIKRFLSLMVLNTVCYQASA.

This sequence belongs to the bacterial solute-binding protein PotD/PotF family.

It localises to the periplasm. Acts as a sensor of norspermidine and enhances biofilm formation. When complexed to norspermidine, could interact with the periplasmic portion of MbaA to regulate its enzymatic activity. The sequence is that of Norspermidine sensor (nspS) from Vibrio cholerae serotype O1 (strain ATCC 39315 / El Tor Inaba N16961).